A 129-amino-acid chain; its full sequence is MSEMTKTPTHYRLLSTLKAMGPYLREGQCSERFYLFDCLASCVNDKKSPEKREFWGWWMELTQNEQEMSACYHIGRYTLAGDWVAEAIPESAQAEVNHTQAEFHKKLVKTLRERFEISVTVSTESAPFA.

Residues 99 to 119 (TQAEFHKKLVKTLRERFEISV) are essential for activity.

It belongs to the Crl family.

The protein resides in the cytoplasm. In terms of biological role, binds to the sigma-S subunit of RNA polymerase, activating expression of sigma-S-regulated genes. Stimulates RNA polymerase holoenzyme formation and may bind to several other sigma factors, such as sigma-70 and sigma-32. This chain is Sigma factor-binding protein Crl, found in Vibrio cholerae serotype O1 (strain ATCC 39541 / Classical Ogawa 395 / O395).